Reading from the N-terminus, the 69-residue chain is U5-agatoxin-Ao1a (69 aa).

An N-terminal signal peptide occupies residues 1–20 (MRTIISLLLLSAMVFAVIEA). A propeptide spanning residues 21-34 (ISLEEGLQLFEGER) is cleaved from the precursor. 2 disulfides stabilise this stretch: Cys36-Cys52 and Cys43-Cys57.

The protein belongs to the neurotoxin 01 (U2-agtx) family. Post-translationally, does not contain a cysteine at position 61 which disrupts the cysteine framework. As to expression, expressed by the venom gland.

It localises to the secreted. The polypeptide is U5-agatoxin-Ao1a (Agelena orientalis (Funnel-web spider)).